The sequence spans 94 residues: Aspartyl/glutamyl-tRNA(Asn/Gln) amidotransferase subunit C (94 aa).

The protein belongs to the GatC family. Heterotrimer of A, B and C subunits.

It catalyses the reaction L-glutamyl-tRNA(Gln) + L-glutamine + ATP + H2O = L-glutaminyl-tRNA(Gln) + L-glutamate + ADP + phosphate + H(+). The enzyme catalyses L-aspartyl-tRNA(Asn) + L-glutamine + ATP + H2O = L-asparaginyl-tRNA(Asn) + L-glutamate + ADP + phosphate + 2 H(+). Allows the formation of correctly charged Asn-tRNA(Asn) or Gln-tRNA(Gln) through the transamidation of misacylated Asp-tRNA(Asn) or Glu-tRNA(Gln) in organisms which lack either or both of asparaginyl-tRNA or glutaminyl-tRNA synthetases. The reaction takes place in the presence of glutamine and ATP through an activated phospho-Asp-tRNA(Asn) or phospho-Glu-tRNA(Gln). This is Aspartyl/glutamyl-tRNA(Asn/Gln) amidotransferase subunit C from Campylobacter jejuni subsp. jejuni serotype O:6 (strain 81116 / NCTC 11828).